The primary structure comprises 182 residues: MNLSNHFLVAMPDMEDAFFSQSVVYICKHDEDGALGIAINKPSPITMDMIFSATGKNIPMRMQHDSVMMGGPVQVERGYVVHTPIGNWQSSIGVSDNIALTSSRDVIENISREGAVDKALISIGYSSWGKGQLERELADNAWLTVPADEHILFDIPYEHRYAAAFAKLGIDPLALFSGAGHA.

Belongs to the UPF0301 (AlgH) family.

The chain is UPF0301 protein NMC1274 from Neisseria meningitidis serogroup C / serotype 2a (strain ATCC 700532 / DSM 15464 / FAM18).